A 258-amino-acid chain; its full sequence is Fibroblast growth factor-binding protein 3 (258 aa).

Positions 1-26 (MTPPKLRASLSPSLLLLLSGCLLAAA) are cleaved as a signal peptide. 2 cysteine pairs are disulfide-bonded: Cys-59-Cys-80 and Cys-90-Cys-124. A disordered region spans residues 146-231 (RLVPRASPPA…GTGPDPDGLD (86 aa)). The span at 186-197 (GTPPPQSAPPKE) shows a compositional bias: pro residues. The span at 198–209 (NPSERKTNEGKR) shows a compositional bias: basic and acidic residues. An intrachain disulfide couples Cys-241 to Cys-249.

It belongs to the fibroblast growth factor-binding protein family. As to quaternary structure, interacts with FGF2.

The protein resides in the secreted. Its function is as follows. Heparin-binding protein which binds to FGF2, prevents binding of FGF2 to heparin and probably inhibits immobilization of FGF2 on extracellular matrix glycosaminoglycans, allowing its release and subsequent activation of FGFR signaling which leads to increased vascular permeability. The chain is Fibroblast growth factor-binding protein 3 (FGFBP3) from Homo sapiens (Human).